The following is a 185-amino-acid chain: ATP-dependent protease subunit HslV (185 aa).

Thr12 is a catalytic residue. Na(+)-binding residues include Ala168, Cys171, and Thr174.

This sequence belongs to the peptidase T1B family. HslV subfamily. A double ring-shaped homohexamer of HslV is capped on each side by a ring-shaped HslU homohexamer. The assembly of the HslU/HslV complex is dependent on binding of ATP.

It is found in the cytoplasm. It catalyses the reaction ATP-dependent cleavage of peptide bonds with broad specificity.. Its activity is regulated as follows. Allosterically activated by HslU binding. Its function is as follows. Protease subunit of a proteasome-like degradation complex believed to be a general protein degrading machinery. The polypeptide is ATP-dependent protease subunit HslV (Roseobacter denitrificans (strain ATCC 33942 / OCh 114) (Erythrobacter sp. (strain OCh 114))).